Here is a 1315-residue protein sequence, read N- to C-terminus: Serine-aspartate repeat-containing protein D (1315 aa).

Positions 1–35 are cleaved as a signal peptide; sequence MLNRENKTAITRKGMVSNRLNKFSIRKYTVGTASI. A YSIRK-G/S signaling motif motif is present at residues 23 to 34; it reads FSIRKYTVGTAS. Residues 36–568 form a ligand binding A region region; sequence LVGTTLIFGL…NNQSGGAGQE (533 aa). Residues 54–185 form a disordered region; the sequence is ESTNKELNEA…NKKVDAKTES (132 aa). 2 stretches are compositionally biased toward polar residues: residues 62 to 71 and 94 to 108; these read EATTSASDNQ and EMVSSQGNETTSNGN. Basic and acidic residues predominate over residues 130–145; that stretch reads KSDEQASPKSTNEDLN. Composition is skewed to polar residues over residues 146-155 and 163-173; these read TKQTISNQEA and NKSVVNVQPTN. A compositionally biased stretch (basic and acidic residues) spans 174 to 183; sequence EENKKVDAKT. CNA-B domains lie at 569–680, 681–791, 792–901, 902–1012, and 1013–1123; these read VYKI…IYKP, KYNL…YKTP, KYNL…FYKP, TYNL…YKTP, and KYSL…EEET. 3 disordered regions span residues 857–883, 972–992, and 1078–1291; these read ETPSGYTPTQVGSGTDEGIDSNGTSTT, YTPTSVTSGNDTEKDSNGLTT, and EKPA…SNNA. 2 stretches are compositionally biased toward polar residues: residues 860 to 869 and 972 to 981; these read SGYTPTQVGS and YTPTSVTSGN. Acidic residues-rich tracts occupy residues 1091-1101, 1118-1134, 1142-1164, and 1172-1254; these read TEDDKDADGGE, YYEEETSDSDSDSDSDS, SDSDSDSDSDSDSDSDSDSDSDS, and SDSD…DSDS. Residues 1278 to 1282 carry the LPXTG sorting signal motif; the sequence is LPETG. Residue threonine 1281 is modified to Pentaglycyl murein peptidoglycan amidated threonine. Positions 1282–1315 are cleaved as a propeptide — removed by sortase; it reads GNENSGSNNATLFGGLFAALGSLLLFGRRKKQNK.

It belongs to the serine-aspartate repeat-containing protein (SDr) family. As to quaternary structure, interacts with host DSG1; this interaction increases S.aureus adherence to keratinocytes. Anchored to the cell wall by sortase A.

The protein localises to the secreted. It is found in the cell wall. In terms of biological role, cell surface-associated calcium-binding protein which plays an important role in adhesion and pathogenesis. Mediates interactions with components of the extracellular matrix such as host DSG1 to promote bacterial adhesion to host cells. Contributes to the resistance to killing by innate immune components such as neutrophils present in blood and thus attenuates bacterial clearance. In Staphylococcus aureus (strain Newman), this protein is Serine-aspartate repeat-containing protein D (sdrD).